Reading from the N-terminus, the 513-residue chain is GMP synthase [glutamine-hydrolyzing] (513 aa).

The region spanning 9–198 (LILVLDFGSQ…VRRVCDCRGQ (190 aa)) is the Glutamine amidotransferase type-1 domain. Cys-86 functions as the Nucleophile in the catalytic mechanism. Active-site residues include His-172 and Glu-174. One can recognise a GMPS ATP-PPase domain in the interval 199–388 (WTMENFIEIE…LGIPEHLVWR (190 aa)). 226–232 (SGGVDSS) serves as a coordination point for ATP.

In terms of assembly, homodimer.

It catalyses the reaction XMP + L-glutamine + ATP + H2O = GMP + L-glutamate + AMP + diphosphate + 2 H(+). It functions in the pathway purine metabolism; GMP biosynthesis; GMP from XMP (L-Gln route): step 1/1. In terms of biological role, catalyzes the synthesis of GMP from XMP. The protein is GMP synthase [glutamine-hydrolyzing] of Staphylococcus aureus (strain USA300).